A 328-amino-acid polypeptide reads, in one-letter code: Biotin synthase (328 aa).

The region spanning 53-282 (FHGNRVDLCA…ATTIRYAGGR (230 aa)) is the Radical SAM core domain. Cys71, Cys75, and Cys78 together coordinate [4Fe-4S] cluster. [2Fe-2S] cluster is bound by residues Ser115, Cys147, Cys207, and Arg277.

It belongs to the radical SAM superfamily. Biotin synthase family. Homodimer. [4Fe-4S] cluster serves as cofactor. Requires [2Fe-2S] cluster as cofactor.

It catalyses the reaction (4R,5S)-dethiobiotin + (sulfur carrier)-SH + 2 reduced [2Fe-2S]-[ferredoxin] + 2 S-adenosyl-L-methionine = (sulfur carrier)-H + biotin + 2 5'-deoxyadenosine + 2 L-methionine + 2 oxidized [2Fe-2S]-[ferredoxin]. The protein operates within cofactor biosynthesis; biotin biosynthesis; biotin from 7,8-diaminononanoate: step 2/2. Its function is as follows. Catalyzes the conversion of dethiobiotin (DTB) to biotin by the insertion of a sulfur atom into dethiobiotin via a radical-based mechanism. The chain is Biotin synthase from Desulforudis audaxviator (strain MP104C).